A 309-amino-acid chain; its full sequence is MRDLPFTLDQLRILKAIVKEGSFKRAADSLYVSQPAISLQIQNLEKQLNIPLFERSNKKATLTEAGNLLLRYGGRILALCEETCRALEDVQNLQGGNLVIGASQTTGTYLMPRLIGLFRQRYPQVNVQLQVHSTRLISWSVANGQVDLAVIGGEVPNELKDTLQVTSYAEDELALILPTSHVFSKLPDIQKEDLYRLRFIALDTQSTIRKVIDKILIQHDIDSSRFKIEMELNSIEAIKNAVQSGLGAAFVSVSAIAKELELGILHWAKIENVTIKRMLSIIINPNRYKSKAAETFSKEILTLFVTPAA.

One can recognise an HTH lysR-type domain in the interval 6–63 (FTLDQLRILKAIVKEGSFKRAADSLYVSQPAISLQIQNLEKQLNIPLFERSNKKATLT). Residues 23–42 (FKRAADSLYVSQPAISLQIQ) constitute a DNA-binding region (H-T-H motif).

It belongs to the LysR transcriptional regulatory family.

It is found in the plastid. It localises to the chloroplast. In terms of biological role, trans-acting transcriptional regulator of RuBisCO genes (rbcL and rbcS) expression. This is Probable RuBisCO transcriptional regulator (rbcR) from Gracilaria tenuistipitata var. liui (Red alga).